The sequence spans 869 residues: DNA mismatch repair protein MutS (869 aa).

Residue 619–626 (GPNMAGKS) participates in ATP binding.

This sequence belongs to the DNA mismatch repair MutS family.

In terms of biological role, this protein is involved in the repair of mismatches in DNA. It is possible that it carries out the mismatch recognition step. This protein has a weak ATPase activity. This is DNA mismatch repair protein MutS from Caldanaerobacter subterraneus subsp. tengcongensis (strain DSM 15242 / JCM 11007 / NBRC 100824 / MB4) (Thermoanaerobacter tengcongensis).